We begin with the raw amino-acid sequence, 245 residues long: Type I iodothyronine deiodinase (245 aa).

Topologically, residues 1 to 9 (LSIRVLLHK) are extracellular. A helical; Signal-anchor for type III membrane protein transmembrane segment spans residues 10–30 (LLILLQVTLSVVVGKTMMILF). Residues 31–245 (PDTTKRYILK…EIRAVLEKLK (215 aa)) lie on the Cytoplasmic side of the membrane. Selenocysteine 123 is an active-site residue. Position 123 (selenocysteine 123) is a non-standard amino acid, selenocysteine.

This sequence belongs to the iodothyronine deiodinase family. In terms of assembly, predominantly monomer. Can form homodimers but homodimerization is not essential for enzyme activity.

It is found in the cell membrane. It localises to the endoplasmic reticulum membrane. The protein localises to the basolateral cell membrane. It carries out the reaction 3,3',5-triiodo-L-thyronine + iodide + A + H(+) = L-thyroxine + AH2. The catalysed reaction is 3,3',5'-triiodo-L-thyronine + iodide + A + H(+) = L-thyroxine + AH2. It catalyses the reaction 3,3'-diiodo-L-thyronine + iodide + A + H(+) = 3,3',5'-triiodo-L-thyronine + AH2. The enzyme catalyses 3,3'-diiodo-L-thyronine + iodide + A + H(+) = 3,3',5-triiodo-L-thyronine + AH2. It carries out the reaction 3'-iodo-L-thyronine + iodide + A + H(+) = 3',5'-diiodo-L-thyronine + AH2. The catalysed reaction is 3-iodo-L-thyronine + iodide + A + H(+) = 3,5-diiodo-L-thyronine + AH2. It catalyses the reaction 3-iodo-L-thyronine + iodide + A + H(+) = 3,3'-diiodo-L-thyronine + AH2. The enzyme catalyses 3,3'-diiodothyronamine + iodide + A + H(+) = 3,3',5'-triiodothyronamine + AH2. It carries out the reaction 3'-iodothyronamine + iodide + A + H(+) = 3',5'-diiodothyronamine + AH2. The catalysed reaction is 3-iodothyronamine + iodide + A + H(+) = 3,3'-diiodothyronamine + AH2. It catalyses the reaction 3,3'-diiodothyronamine + iodide + A + H(+) = 3,3',5-triiodothyronamine + AH2. The enzyme catalyses 3-iodothyronamine + iodide + A + H(+) = 3,5-diiodothyronamine + AH2. It carries out the reaction 3,3'-diiodo-L-thyronine sulfate + iodide + A + H(+) = 3,3',5'-triiodo-L-thyronine sulfate + AH2. The catalysed reaction is 3,3',5'-triiodo-L-thyronine sulfate + iodide + A + H(+) = L-thyroxine sulfate + AH2. It catalyses the reaction 3,3'-diiodo-L-thyronine sulfate + iodide + A + H(+) = 3,3',5-triiodo-L-thyronine sulfate + AH2. Plays a crucial role in the metabolism of thyroid hormones (TH) and has specific roles in TH activation and inactivation by deiodination. Catalyzes the deiodiantion of L-thyroxine (T4) to 3,5,3'-triiodothyronine (T3) and 3,3',5'-triiodothyronine (rT3) to 3,3'-diiodothyronine (3,3'-T2) via outer-ring deiodination (ORD). Catalyzes the deiodiantion of T4 to rT3, T3 to 3,3'-T2, 3,5-diiodothyronine (3,5-T2) to 3-monoiodothyronine (3-T1) and 3,3'-T2 to 3-T1 via inner-ring deiodination (IRD). Catalyzes the deiodiantion of 3',5'-diiodothyronine (3',5'-T2) to 3'-monoiodothyronine (3'-T1) via ORD. Catalyzes the phenolic ring deiodinations of 3,3',5'-triiodothyronamine, 3',5'-diiodothyronamine and 3,3'-diiodothyronamine as well as tyrosyl ring deiodinations of 3,5,3'-triiodothyronamine and 3,5-diiodothyronamine. Catalyzes the deiodination of L-thyroxine sulfate and 3,3',5-triiodo-L-thyronine sulfate via IRD and of 3,3',5'-triiodo-L-thyronine sulfate via ORD. This chain is Type I iodothyronine deiodinase (DIO1), found in Gallus gallus (Chicken).